The chain runs to 348 residues: Centromere protein N-B (348 aa).

The protein belongs to the CENP-N/CHL4 family.

It is found in the nucleus. Its subcellular location is the chromosome. The protein resides in the centromere. Its function is as follows. Probable component of a centromeric complex involved in assembly of kinetochore proteins, mitotic progression and chromosome segregation. The protein is Centromere protein N-B (cenpn-b) of Xenopus laevis (African clawed frog).